A 590-amino-acid polypeptide reads, in one-letter code: Conglutin beta 4 (590 aa).

The signal sequence occupies residues Met1–Gly30. Basic and acidic residues predominate over residues His38 to Glu105. A disordered region spans residues His38–Tyr175. Over residues Gln137–Gln146 the composition is skewed to low complexity. The Cupin type-1 1 domain maps to Tyr174–Gln332. Residue Asn239 is glycosylated (N-linked (GlcNAc...) asparagine). 2 disordered regions span residues Asp340 to Val362 and Lys374 to Asn396. Positions Glu346–Val362 are enriched in basic and acidic residues. The 158-residue stretch at Phe391–Glu548 folds into the Cupin type-1 2 domain. N-linked (GlcNAc...) asparagine glycosylation is present at Asn498. Residues Phe559–Arg579 are disordered.

It belongs to the 7S seed storage protein family. Component of globulins complexes which accumulate in seeds.

Seed storage protein. Accumulates during seed development and is hydrolyzed after germination to provide a carbon and nitrogen source for the developing seedling. In Lupinus angustifolius (Narrow-leaved blue lupine), this protein is Conglutin beta 4.